A 122-amino-acid polypeptide reads, in one-letter code: MEIIHIGTDIIEISRIREAIATHGNRLLNRIFTEAEQKYCLEKTDPIPSFAGRFAGKEAVAKALGTGIGSVVAWKDIEVFKVSHGPEVLLPSHVYAKIGISKVILSISHCKEYATATAIALA.

Residues D9 and E58 each coordinate Mg(2+).

This sequence belongs to the P-Pant transferase superfamily. AcpS family. Mg(2+) serves as cofactor.

Its subcellular location is the cytoplasm. The catalysed reaction is apo-[ACP] + CoA = holo-[ACP] + adenosine 3',5'-bisphosphate + H(+). Its function is as follows. Transfers the 4'-phosphopantetheine moiety from coenzyme A to a Ser of acyl-carrier-protein. In Chlamydia pneumoniae (Chlamydophila pneumoniae), this protein is Holo-[acyl-carrier-protein] synthase.